The primary structure comprises 119 residues: Large ribosomal subunit protein uL18 (119 aa).

The protein belongs to the universal ribosomal protein uL18 family. Part of the 50S ribosomal subunit; part of the 5S rRNA/L5/L18/L25 subcomplex. Contacts the 5S and 23S rRNAs.

Its function is as follows. This is one of the proteins that bind and probably mediate the attachment of the 5S RNA into the large ribosomal subunit, where it forms part of the central protuberance. In Cupriavidus taiwanensis (strain DSM 17343 / BCRC 17206 / CCUG 44338 / CIP 107171 / LMG 19424 / R1) (Ralstonia taiwanensis (strain LMG 19424)), this protein is Large ribosomal subunit protein uL18.